Here is a 336-residue protein sequence, read N- to C-terminus: Holliday junction branch migration complex subunit RuvB (336 aa).

Positions 4–184 (ADRLVAPGSI…FGIVQRLEFY (181 aa)) are large ATPase domain (RuvB-L). Residues Ile-23, Arg-24, Gly-65, Lys-68, Thr-69, Thr-70, 131–133 (EDY), Arg-174, Tyr-184, and Arg-221 contribute to the ATP site. Position 69 (Thr-69) interacts with Mg(2+). Residues 185-255 (QVADLQHIVS…VASQALDMLN (71 aa)) are small ATPAse domain (RuvB-S). The tract at residues 258 to 336 (AEGFDYMDRK…HFGITPPQMP (79 aa)) is head domain (RuvB-H). DNA-binding residues include Arg-294, Arg-313, and Arg-318.

This sequence belongs to the RuvB family. In terms of assembly, homohexamer. Forms an RuvA(8)-RuvB(12)-Holliday junction (HJ) complex. HJ DNA is sandwiched between 2 RuvA tetramers; dsDNA enters through RuvA and exits via RuvB. An RuvB hexamer assembles on each DNA strand where it exits the tetramer. Each RuvB hexamer is contacted by two RuvA subunits (via domain III) on 2 adjacent RuvB subunits; this complex drives branch migration. In the full resolvosome a probable DNA-RuvA(4)-RuvB(12)-RuvC(2) complex forms which resolves the HJ.

The protein localises to the cytoplasm. The catalysed reaction is ATP + H2O = ADP + phosphate + H(+). In terms of biological role, the RuvA-RuvB-RuvC complex processes Holliday junction (HJ) DNA during genetic recombination and DNA repair, while the RuvA-RuvB complex plays an important role in the rescue of blocked DNA replication forks via replication fork reversal (RFR). RuvA specifically binds to HJ cruciform DNA, conferring on it an open structure. The RuvB hexamer acts as an ATP-dependent pump, pulling dsDNA into and through the RuvAB complex. RuvB forms 2 homohexamers on either side of HJ DNA bound by 1 or 2 RuvA tetramers; 4 subunits per hexamer contact DNA at a time. Coordinated motions by a converter formed by DNA-disengaged RuvB subunits stimulates ATP hydrolysis and nucleotide exchange. Immobilization of the converter enables RuvB to convert the ATP-contained energy into a lever motion, pulling 2 nucleotides of DNA out of the RuvA tetramer per ATP hydrolyzed, thus driving DNA branch migration. The RuvB motors rotate together with the DNA substrate, which together with the progressing nucleotide cycle form the mechanistic basis for DNA recombination by continuous HJ branch migration. Branch migration allows RuvC to scan DNA until it finds its consensus sequence, where it cleaves and resolves cruciform DNA. The protein is Holliday junction branch migration complex subunit RuvB of Cronobacter sakazakii (strain ATCC BAA-894) (Enterobacter sakazakii).